We begin with the raw amino-acid sequence, 586 residues long: Exocyst complex component EXO70A3 (586 aa).

2 N-linked (GlcNAc...) asparagine glycosylation sites follow: Asn65 and Asn106. The interval 119–149 (CLPSNLRPPSDDEGSDGKSHDPQSNGLGKTD) is disordered. Residues 258–278 (FAEITTISFGMLLSFGYAIAI) traverse the membrane as a helical segment. N-linked (GlcNAc...) asparagine glycosylation is found at Asn321 and Asn487.

This sequence belongs to the EXO70 family. Subunit of the exocyst complex. In terms of tissue distribution, confined to the outer layer of the columella cells in the root tips of young seedlings.

It localises to the membrane. Component of the exocyst complex involved in the docking of exocytic vesicles with fusion sites on the plasma membrane during regulated or polarized secretion. Involved in PIN4 exocytosis and gravitropic responses in columella cells. By monitoring PIN4 distribution in columella cells, modulates auxin repartition and subsequently regulates the root system architecture (RSA), thus being a component of the auxin-dependent root directional growth (ARD). The chain is Exocyst complex component EXO70A3 from Arabidopsis thaliana (Mouse-ear cress).